The primary structure comprises 383 residues: Transposase InsI for insertion sequence element IS30A (383 aa).

The 167-residue stretch at 213-379 (VNGTPIHERS…TPKEIIERGV (167 aa)) folds into the Integrase catalytic domain.

It belongs to the transposase IS30 family.

Functionally, required for the transposition of the insertion element. This chain is Transposase InsI for insertion sequence element IS30A (insI1), found in Escherichia coli (strain K12).